The sequence spans 332 residues: Casein kinase II subunit alpha (332 aa).

Residues 34–319 (YEVVRKVGRG…ALEAMTHPYF (286 aa)) form the Protein kinase domain. ATP-binding positions include 40–48 (VGRGKYSEV) and K63. The Proton acceptor role is filled by D151.

The protein belongs to the protein kinase superfamily. Ser/Thr protein kinase family. CK2 subfamily. As to quaternary structure, tetramer of two alpha and two beta chains (possible).

It catalyses the reaction L-seryl-[protein] + ATP = O-phospho-L-seryl-[protein] + ADP + H(+). The catalysed reaction is L-threonyl-[protein] + ATP = O-phospho-L-threonyl-[protein] + ADP + H(+). Functionally, casein kinases are operationally defined by their preferential utilization of acidic proteins such as caseins as substrates. The alpha chain contains the catalytic site. The protein is Casein kinase II subunit alpha (ACK2) of Zea mays (Maize).